An 83-amino-acid chain; its full sequence is Small ribosomal subunit protein bS16 (83 aa).

This sequence belongs to the bacterial ribosomal protein bS16 family.

This chain is Small ribosomal subunit protein bS16, found in Acidovorax ebreus (strain TPSY) (Diaphorobacter sp. (strain TPSY)).